The primary structure comprises 322 residues: ATP-dependent 6-phosphofructokinase (322 aa).

Residues Gly-12, 73-74 (RF), and 103-106 (GDGT) contribute to the ATP site. Asp-104 provides a ligand contact to Mg(2+). 126–128 (TID) is a substrate binding site. Residue Asp-128 is the Proton acceptor of the active site. Arg-155 serves as a coordination point for ADP. Residues Arg-163 and 170 to 172 (MGR) each bind substrate. ADP contacts are provided by residues 186 to 188 (GSE), Lys-212, and 214 to 216 (KPS). Substrate is bound by residues Glu-223, Arg-245, and 251–254 (HTQR).

Belongs to the phosphofructokinase type A (PFKA) family. ATP-dependent PFK group I subfamily. Prokaryotic clade 'B1' sub-subfamily. Homotetramer. Mg(2+) is required as a cofactor.

It localises to the cytoplasm. The catalysed reaction is beta-D-fructose 6-phosphate + ATP = beta-D-fructose 1,6-bisphosphate + ADP + H(+). Its pathway is carbohydrate degradation; glycolysis; D-glyceraldehyde 3-phosphate and glycerone phosphate from D-glucose: step 3/4. Allosterically activated by ADP and other diphosphonucleosides, and allosterically inhibited by phosphoenolpyruvate. Catalyzes the phosphorylation of D-fructose 6-phosphate to fructose 1,6-bisphosphate by ATP, the first committing step of glycolysis. This is ATP-dependent 6-phosphofructokinase from Mesomycoplasma hyopneumoniae (strain 7448) (Mycoplasma hyopneumoniae).